The primary structure comprises 60 residues: Large ribosomal subunit protein bL32 (60 aa).

The tract at residues 1 to 60 (MAVQQNKKSRSARDMRRSHDALEASTLSVEKSTGEVHLRHHVSPEGVYRGRKVIDKGADE) is disordered. A compositionally biased stretch (basic and acidic residues) spans 11–22 (SARDMRRSHDAL).

The protein belongs to the bacterial ribosomal protein bL32 family.

The polypeptide is Large ribosomal subunit protein bL32 (Ectopseudomonas mendocina (strain ymp) (Pseudomonas mendocina)).